We begin with the raw amino-acid sequence, 222 residues long: Triosephosphate isomerase (222 aa).

Residue 9 to 11 participates in substrate binding; the sequence is NYK. H93 functions as the Electrophile in the catalytic mechanism. The active-site Proton acceptor is E141. Substrate-binding positions include I146, G181, and 202-203; that span reads AS.

This sequence belongs to the triosephosphate isomerase family. As to quaternary structure, homotetramer; dimer of dimers.

It is found in the cytoplasm. The catalysed reaction is D-glyceraldehyde 3-phosphate = dihydroxyacetone phosphate. It participates in carbohydrate biosynthesis; gluconeogenesis. It functions in the pathway carbohydrate degradation; glycolysis; D-glyceraldehyde 3-phosphate from glycerone phosphate: step 1/1. Functionally, involved in the gluconeogenesis. Catalyzes stereospecifically the conversion of dihydroxyacetone phosphate (DHAP) to D-glyceraldehyde-3-phosphate (G3P). In Methanosarcina barkeri (strain Fusaro / DSM 804), this protein is Triosephosphate isomerase.